The following is a 65-amino-acid chain: MPKLKTNSGAKKRFALTGTGKIKRKHAFKSHILTKKTKKQKRNLTYFSTVHKVDENAVKQLLCLR.

This sequence belongs to the bacterial ribosomal protein bL35 family.

The sequence is that of Large ribosomal subunit protein bL35 from Porphyromonas gingivalis (strain ATCC 33277 / DSM 20709 / CIP 103683 / JCM 12257 / NCTC 11834 / 2561).